Consider the following 334-residue polypeptide: Delta(1)-pyrroline-2-carboxylate/Delta(1)-piperideine-2-carboxylate reductase (334 aa).

The Charge relay system role is filled by serine 44. The active-site Proton donor is histidine 45. Arginine 49 is a binding site for substrate. Residue 117–121 (HFSAL) coordinates NADP(+). Threonine 157 serves as a coordination point for substrate. 175–177 (DFA) is a binding site for NADP(+). 183-184 (RG) contacts substrate. Catalysis depends on glutamate 185, which acts as the Charge relay system. NADP(+) is bound by residues 226 to 227 (HK) and 301 to 307 (RLPSQRR).

It belongs to the LDH2/MDH2 oxidoreductase family. In terms of assembly, homodimer.

It carries out the reaction L-pipecolate + NADP(+) = Delta(1)-piperideine-2-carboxylate + NADPH + H(+). The enzyme catalyses L-proline + NADP(+) = 1-pyrroline-2-carboxylate + NADPH + H(+). The catalysed reaction is cis-4-hydroxy-L-proline + NADP(+) = Delta(1)-pyrroline-(4S)-hydroxy-2-carboxylate + NADPH + 2 H(+). Its function is as follows. Catalyzes the reduction of both Delta(1)-pyrroline-2-carboxylate (Pyr2C) and Delta(1)-piperideine-2-carboxylate (Pip2C) to L-proline and L-pipecolate, respectively, using NADPH as the electron donor. Cannot use NADH instead of NADPH. Is likely involved in a degradation pathway that converts trans-3-hydroxy-L-proline (t3LHyp) to L-proline, which would allow P.aeruginosa to grow on t3LHyp as a sole carbon source. Can also catalyze the reverse oxidation reactions, albeit at a much lower rate. Is also able to use Delta(1)-pyrroline-(4S)-hydroxy-2-carboxylate (Pyr4SH2C) and cis-4-hydroxy-L-proline (c4LHyp) as substrates, and might be involved in the metabolism of c4LHyp, a compound which is generated by the hydroxylation of free L-proline in bacteria. The polypeptide is Delta(1)-pyrroline-2-carboxylate/Delta(1)-piperideine-2-carboxylate reductase (Pseudomonas aeruginosa (strain ATCC 15692 / DSM 22644 / CIP 104116 / JCM 14847 / LMG 12228 / 1C / PRS 101 / PAO1)).